Here is a 144-residue protein sequence, read N- to C-terminus: Putative pre-16S rRNA nuclease (144 aa).

The protein belongs to the YqgF nuclease family.

Its subcellular location is the cytoplasm. Functionally, could be a nuclease involved in processing of the 5'-end of pre-16S rRNA. This is Putative pre-16S rRNA nuclease from Blochmanniella pennsylvanica (strain BPEN).